The following is a 374-amino-acid chain: uncharacterized protein (374 aa).

Residues 27–49 (AISPILALLIVLGVTIVVGAVFY) traverse the membrane as a helical segment.

It is found in the membrane. This is an uncharacterized protein from Methanocaldococcus jannaschii (strain ATCC 43067 / DSM 2661 / JAL-1 / JCM 10045 / NBRC 100440) (Methanococcus jannaschii).